A 140-amino-acid chain; its full sequence is Large ribosomal subunit protein bL17 (140 aa).

This sequence belongs to the bacterial ribosomal protein bL17 family. In terms of assembly, part of the 50S ribosomal subunit. Contacts protein L32.

This is Large ribosomal subunit protein bL17 from Gluconobacter oxydans (strain 621H) (Gluconobacter suboxydans).